The sequence spans 126 residues: Lymphocyte antigen 6E (126 aa).

The N-terminal stretch at 1-20 (MKAFLFAVLAAVLCVERAHT) is a signal peptide. Residues 21–98 (LICFSCSDAS…CCDSFLCNIS (78 aa)) form the UPAR/Ly6 domain. 5 disulfide bridges follow: cysteine 23–cysteine 48, cysteine 26–cysteine 35, cysteine 41–cysteine 69, cysteine 73–cysteine 89, and cysteine 90–cysteine 95. Asparagine 96 is a glycosylation site (N-linked (GlcNAc...) asparagine). Serine 98 is lipidated: GPI-anchor amidated serine. A propeptide spans 99–126 (GSSSVKASYAVLALGILVSFVYVLRARE) (removed in mature form).

As to expression, expressed by thymic blast cells.

It localises to the cell membrane. This Gallus gallus (Chicken) protein is Lymphocyte antigen 6E (LY6E).